Consider the following 372-residue polypeptide: Histidinol-phosphate aminotransferase (372 aa).

An N6-(pyridoxal phosphate)lysine modification is found at K229.

The protein belongs to the class-II pyridoxal-phosphate-dependent aminotransferase family. Histidinol-phosphate aminotransferase subfamily. In terms of assembly, homodimer. Requires pyridoxal 5'-phosphate as cofactor.

The catalysed reaction is L-histidinol phosphate + 2-oxoglutarate = 3-(imidazol-4-yl)-2-oxopropyl phosphate + L-glutamate. The protein operates within amino-acid biosynthesis; L-histidine biosynthesis; L-histidine from 5-phospho-alpha-D-ribose 1-diphosphate: step 7/9. The chain is Histidinol-phosphate aminotransferase from Bdellovibrio bacteriovorus (strain ATCC 15356 / DSM 50701 / NCIMB 9529 / HD100).